Here is a 191-residue protein sequence, read N- to C-terminus: Ribonuclease HII (191 aa).

An RNase H type-2 domain is found at 4 to 191; the sequence is YTAAGLDEVG…HRKTFLSKIQ (188 aa). A divalent metal cation is bound by residues aspartate 10, glutamate 11, and aspartate 106.

This sequence belongs to the RNase HII family. The cofactor is Mn(2+). Requires Mg(2+) as cofactor.

It localises to the cytoplasm. The enzyme catalyses Endonucleolytic cleavage to 5'-phosphomonoester.. Its function is as follows. Endonuclease that specifically degrades the RNA of RNA-DNA hybrids. This is Ribonuclease HII from Prochlorococcus marinus (strain SARG / CCMP1375 / SS120).